The primary structure comprises 528 residues: ATP synthase subunit beta 2 (528 aa).

The span at 1 to 10 (MADPQATNGT) shows a compositional bias: polar residues. Residues 1–27 (MADPQATNGTGAACAERDASDVGDARD) form a disordered region. Residues 15–27 (AERDASDVGDARD) show a composition bias toward basic and acidic residues. 179–186 (GGAGVGKT) serves as a coordination point for ATP. Basic and acidic residues predominate over residues 488 to 499 (AAAREADARREA). A disordered region spans residues 488–528 (AAAREADARREAAAAASGAGPGTTSDPASGSAEPQGARHGR).

This sequence belongs to the ATPase alpha/beta chains family. F-type ATPases have 2 components, CF(1) - the catalytic core - and CF(0) - the membrane proton channel. CF(1) has five subunits: alpha(3), beta(3), gamma(1), delta(1), epsilon(1). CF(0) has three main subunits: a(1), b(2) and c(9-12). The alpha and beta chains form an alternating ring which encloses part of the gamma chain. CF(1) is attached to CF(0) by a central stalk formed by the gamma and epsilon chains, while a peripheral stalk is formed by the delta and b chains.

It is found in the cell inner membrane. The enzyme catalyses ATP + H2O + 4 H(+)(in) = ADP + phosphate + 5 H(+)(out). Produces ATP from ADP in the presence of a proton gradient across the membrane. The catalytic sites are hosted primarily by the beta subunits. In Burkholderia pseudomallei (strain 1106a), this protein is ATP synthase subunit beta 2.